The following is a 651-amino-acid chain: NADH oxidase (651 aa).

Residue Gln104 coordinates FMN. Tyr175 acts as the Proton donor in catalysis. FMN is bound by residues Arg223 and 320-321 (GR). [4Fe-4S] cluster contacts are provided by Cys344, Cys347, Cys351, and Cys364. FAD contacts are provided by Ala396, Glu415, Gln423, Lys433, and Ala460.

This sequence in the N-terminal section; belongs to the NADH:flavin oxidoreductase/NADH oxidase family. In terms of assembly, homohexamer. FMN is required as a cofactor. It depends on FAD as a cofactor. The cofactor is [4Fe-4S] cluster. Post-translationally, the N-terminus is blocked.

The enzyme catalyses A + NADH + H(+) = AH2 + NAD(+). Functionally, reduces a range of alternative electron acceptors. The chain is NADH oxidase from Thermoanaerobacter brockii (Thermoanaerobium brockii).